We begin with the raw amino-acid sequence, 417 residues long: Tol-Pal system protein TolB (417 aa).

An N-terminal signal peptide occupies residues 1-16 (MRYLWLFLIGTIGLFA).

This sequence belongs to the TolB family. The Tol-Pal system is composed of five core proteins: the inner membrane proteins TolA, TolQ and TolR, the periplasmic protein TolB and the outer membrane protein Pal. They form a network linking the inner and outer membranes and the peptidoglycan layer.

It localises to the periplasm. In terms of biological role, part of the Tol-Pal system, which plays a role in outer membrane invagination during cell division and is important for maintaining outer membrane integrity. In Helicobacter pylori (strain HPAG1), this protein is Tol-Pal system protein TolB.